Here is a 512-residue protein sequence, read N- to C-terminus: Sugar transport protein MST7 (512 aa).

At 1 to 17 the chain is on the cytoplasmic side; the sequence is MENAGAGDGAPKHYPGK. A helical transmembrane segment spans residues 18 to 38; it reads MTVFVFIACLVASSGGLIFGY. At 39–81 the chain is on the extracellular side; the sequence is DIGISGGVTSMDPFLSRFFPSVYAKEKEVVDTNQYCKFDSEPL. Residues 82–102 form a helical membrane-spanning segment; the sequence is TLFTSSLYLAALIASLFASVI. The Cytoplasmic segment spans residues 103 to 116; it reads TRKLGRKMTMLGGG. The helical transmembrane segment at 117–137 threads the bilayer; that stretch reads FIFLIGAVLNGAAVNVAMLII. Topologically, residues 138–139 are extracellular; the sequence is GR. The helical transmembrane segment at 140 to 160 threads the bilayer; the sequence is ILLGIGVGFSIQAVPLYLSEM. The Cytoplasmic segment spans residues 161–166; the sequence is APAKMR. Residues 167–187 form a helical membrane-spanning segment; sequence GMLNIIFQLMITVGILFANLI. At 188–201 the chain is on the extracellular side; sequence NYFTDKIAGGWGWR. A helical membrane pass occupies residues 202–222; it reads VSLGLAAVPAVIMTVGSILLP. The Cytoplasmic portion of the chain corresponds to 223–294; sequence DTPNSLLSRG…MSVLIPTLQQ (72 aa). The helical transmembrane segment at 295–315 threads the bilayer; the sequence is LTGINVVMFYAPVLFKTIGFG. At 316 to 320 the chain is on the extracellular side; it reads GTASL. Residues 321 to 341 form a helical membrane-spanning segment; sequence MSAVITGLVNMFATFVSIATV. The Cytoplasmic segment spans residues 342-347; that stretch reads DRFGRR. The chain crosses the membrane as a helical span at residues 348 to 368; that stretch reads VLFIQGGIQMIIAQFILGTLI. Residues 369–385 are Extracellular-facing; it reads AVKFGTAGVANISQGYA. A helical transmembrane segment spans residues 386–406; it reads IVVVLFICLFVSAFAWSWGPL. Residues 407–425 lie on the Cytoplasmic side of the membrane; it reads GWLVPSEIFPLEIRSAAQS. A helical membrane pass occupies residues 426-446; sequence VVVVFNMAFTFFIAQIFLMML. The Extracellular portion of the chain corresponds to 447-450; the sequence is CRLK. The chain crosses the membrane as a helical span at residues 451-471; sequence FGLFFFFGAMELIMTGFVLVF. Residues 472–512 are Cytoplasmic-facing; sequence LPETKGIPIEEMDRIWGEHWYWSRFVGAGRNRVMQMASTNV.

This sequence belongs to the major facilitator superfamily. Sugar transporter (TC 2.A.1.1) family.

It is found in the membrane. Its function is as follows. Mediates active uptake of hexoses by sugar:proton symport. The polypeptide is Sugar transport protein MST7 (Oryza sativa subsp. japonica (Rice)).